Consider the following 491-residue polypeptide: Synaptotagmin-9 (491 aa).

The Vesicular segment spans residues 1 to 52 (MPGARDALCHQALQLLAELCARGALEHDSCQDFIYHLRDRARPRLRDPDISV). The segment at 9-31 (CHQALQLLAELCARGALEHDSCQ) is cysteine motif. The helical transmembrane segment at 53-73 (SLLTLVVTACGLALFGVSLFV) threads the bilayer. At 74-491 (SWKLCWVPWR…AHWHSLVEKR (418 aa)) the chain is on the cytoplasmic side. At S177 the chain carries Phosphoserine. C2 domains lie at 220-341 (ACGK…ILWK) and 352-485 (DLGE…AHWH). 11 residues coordinate Ca(2+): D251, D257, D309, F310, D311, S314, D317, D383, D389, D443, and D445.

Belongs to the synaptotagmin family. Homodimer; disulfide-linked via the cysteine motif. Can also form heterodimers with SYT3, SYT6, SYT7 and SYT10. Requires Ca(2+) as cofactor.

It is found in the cytoplasmic vesicle. It localises to the secretory vesicle. The protein resides in the synaptic vesicle membrane. Its function is as follows. May be involved in Ca(2+)-dependent exocytosis of secretory vesicles through Ca(2+) and phospholipid binding to the C2 domain or may serve as Ca(2+) sensors in the process of vesicular trafficking and exocytosis. The protein is Synaptotagmin-9 (SYT9) of Homo sapiens (Human).